The primary structure comprises 480 residues: Aspartyl/glutamyl-tRNA(Asn/Gln) amidotransferase subunit B (480 aa).

The protein belongs to the GatB/GatE family. GatB subfamily. In terms of assembly, heterotrimer of A, B and C subunits.

The catalysed reaction is L-glutamyl-tRNA(Gln) + L-glutamine + ATP + H2O = L-glutaminyl-tRNA(Gln) + L-glutamate + ADP + phosphate + H(+). It catalyses the reaction L-aspartyl-tRNA(Asn) + L-glutamine + ATP + H2O = L-asparaginyl-tRNA(Asn) + L-glutamate + ADP + phosphate + 2 H(+). Its function is as follows. Allows the formation of correctly charged Asn-tRNA(Asn) or Gln-tRNA(Gln) through the transamidation of misacylated Asp-tRNA(Asn) or Glu-tRNA(Gln) in organisms which lack either or both of asparaginyl-tRNA or glutaminyl-tRNA synthetases. The reaction takes place in the presence of glutamine and ATP through an activated phospho-Asp-tRNA(Asn) or phospho-Glu-tRNA(Gln). The sequence is that of Aspartyl/glutamyl-tRNA(Asn/Gln) amidotransferase subunit B from Streptococcus pneumoniae (strain P1031).